We begin with the raw amino-acid sequence, 352 residues long: Thiosulfate transporter TsuA (352 aa).

A helical transmembrane segment spans residues M1–R21. Residues G22 to A44 lie on the Cytoplasmic side of the membrane. Residues L45–L65 form a helical membrane-spanning segment. The Periplasmic segment spans residues T66–G70. A helical transmembrane segment spans residues A71–A91. Residues G92 to A102 lie on the Cytoplasmic side of the membrane. Residues G103 to M123 form a helical membrane-spanning segment. At R124 to T148 the chain is on the periplasmic side. Residues F149–M169 traverse the membrane as a helical segment. Topologically, residues K170–R197 are cytoplasmic. The chain crosses the membrane as a helical span at residues W198 to S218. The Periplasmic portion of the chain corresponds to E219–Y247. A helical membrane pass occupies residues I248 to A268. The Cytoplasmic segment spans residues S269–G289. Residues V290–M310 form a helical membrane-spanning segment. Residues T311–Q317 are Periplasmic-facing. Residues G318–V338 form a helical membrane-spanning segment. The Cytoplasmic portion of the chain corresponds to R339–N352.

Belongs to the TsuA/YedE (TC 9.B.102) family.

It is found in the cell inner membrane. The catalysed reaction is thiosulfate(in) = thiosulfate(out). Functionally, mediates thiosulfate uptake. This Escherichia coli (strain K12) protein is Thiosulfate transporter TsuA.